A 611-amino-acid chain; its full sequence is Ankyrin repeat protein SKIP35 (611 aa).

6 ANK repeats span residues leucine 292–alanine 322, aspartate 323–leucine 353, aspartate 356–alanine 384, phenylalanine 385–leucine 414, leucine 416–leucine 442, and leucine 445–alanine 478.

Interacts with SKP1A/ASK1.

In Arabidopsis thaliana (Mouse-ear cress), this protein is Ankyrin repeat protein SKIP35 (SKIP35).